The sequence spans 355 residues: Histidinol-phosphate aminotransferase (355 aa).

At K222 the chain carries N6-(pyridoxal phosphate)lysine.

This sequence belongs to the class-II pyridoxal-phosphate-dependent aminotransferase family. Histidinol-phosphate aminotransferase subfamily. Pyridoxal 5'-phosphate is required as a cofactor.

It carries out the reaction L-histidinol phosphate + 2-oxoglutarate = 3-(imidazol-4-yl)-2-oxopropyl phosphate + L-glutamate. Its pathway is amino-acid biosynthesis; L-histidine biosynthesis; L-histidine from 5-phospho-alpha-D-ribose 1-diphosphate: step 7/9. This chain is Histidinol-phosphate aminotransferase, found in Natronomonas pharaonis (strain ATCC 35678 / DSM 2160 / CIP 103997 / JCM 8858 / NBRC 14720 / NCIMB 2260 / Gabara) (Halobacterium pharaonis).